A 445-amino-acid chain; its full sequence is Argininosuccinate synthase (445 aa).

Residues alanine 17–serine 25 and alanine 43 each bind ATP. Tyrosine 99 lines the L-citrulline pocket. Residues glycine 129 and threonine 131 each contribute to the ATP site. L-aspartate contacts are provided by threonine 131, asparagine 135, and aspartate 136. Asparagine 135 lines the L-citrulline pocket. Aspartate 136 contacts ATP. Residues arginine 139 and serine 192 each contribute to the L-citrulline site. Residue aspartate 194 coordinates ATP. Residues threonine 201, glutamate 203, and glutamate 280 each contribute to the L-citrulline site.

The protein belongs to the argininosuccinate synthase family. Type 2 subfamily. As to quaternary structure, homotetramer.

Its subcellular location is the cytoplasm. The catalysed reaction is L-citrulline + L-aspartate + ATP = 2-(N(omega)-L-arginino)succinate + AMP + diphosphate + H(+). Its pathway is amino-acid biosynthesis; L-arginine biosynthesis; L-arginine from L-ornithine and carbamoyl phosphate: step 2/3. This is Argininosuccinate synthase from Burkholderia ambifaria (strain MC40-6).